A 464-amino-acid chain; its full sequence is Dihydrolipoyl dehydrogenase (464 aa).

FAD contacts are provided by residues 36 to 44, lysine 53, and alanine 119; that span reads EGAALGGTC. A disulfide bridge links cysteine 44 with cysteine 49. Residues 184-188, glutamate 207, and 269-272 each bind NAD(+); these read GGGYI and AVGR. FAD-binding residues include aspartate 311 and alanine 319. Catalysis depends on histidine 443, which acts as the Proton acceptor.

Belongs to the class-I pyridine nucleotide-disulfide oxidoreductase family. As to quaternary structure, homodimer. FAD serves as cofactor.

The protein localises to the cytoplasm. It carries out the reaction N(6)-[(R)-dihydrolipoyl]-L-lysyl-[protein] + NAD(+) = N(6)-[(R)-lipoyl]-L-lysyl-[protein] + NADH + H(+). In terms of biological role, the branched-chain alpha-keto dehydrogenase complex catalyzes the overall conversion of alpha-keto acids to acyl-CoA and CO(2). It contains multiple copies of 3 enzymatic components: branched-chain alpha-keto acid decarboxylase (E1), lipoamide acyltransferase (E2) and lipoamide dehydrogenase (E3). This is Dihydrolipoyl dehydrogenase from Pseudomonas aeruginosa (strain ATCC 15692 / DSM 22644 / CIP 104116 / JCM 14847 / LMG 12228 / 1C / PRS 101 / PAO1).